The sequence spans 106 residues: Thioredoxin (106 aa).

Lys3 is subject to N6-acetyllysine. In terms of domain architecture, Thioredoxin spans Lys3–Val106. Lys8 carries the N6-succinyllysine modification. Catalysis depends on nucleophile residues Cys32 and Cys35. A disulfide bond links Cys32 and Cys35. Residue Lys39 is modified to N6-acetyllysine. 2 positions are modified to S-nitrosocysteine: Cys62 and Cys69. Position 73 is an S-nitrosocysteine; alternate (Cys73). N6-acetyllysine; alternate is present on Lys95. N6-succinyllysine; alternate is present on Lys95.

The protein belongs to the thioredoxin family. As to quaternary structure, homodimer; disulfide-linked. Interacts with TXNIP through the redox-active site. Interacts with MAP3K5 and CASP3. Interacts with APEX1; the interaction stimulates the FOS/JUN AP-1 DNA-binding activity in a redox-dependent manner. In the fully reduced protein, both Cys-69 and Cys-73 are nitrosylated in response to nitric oxide (NO). When two disulfide bonds are present in the protein, only Cys-73 is nitrosylated. Cys-73 can serve as donor for nitrosylation of target proteins.

It is found in the nucleus. Its subcellular location is the cytoplasm. The protein localises to the secreted. In terms of biological role, participates in various redox reactions through the reversible oxidation of its active center dithiol to a disulfide and catalyzes dithiol-disulfide exchange reactions. Plays a role in the reversible S-nitrosylation of cysteine residues in target proteins, and thereby contributes to the response to intracellular nitric oxide. Nitrosylates the active site Cys of CASP3 in response to nitric oxide (NO), and thereby inhibits caspase-3 activity. Induces the FOS/JUN AP-1 DNA binding activity in ionizing radiation (IR) cells through its oxidation/reduction status and stimulates AP-1 transcriptional activity. In Pongo abelii (Sumatran orangutan), this protein is Thioredoxin (TXN).